A 140-amino-acid chain; its full sequence is Phosphoribosyl-AMP cyclohydrolase (140 aa).

D84 provides a ligand contact to Mg(2+). C85 provides a ligand contact to Zn(2+). Residues D86 and D88 each contribute to the Mg(2+) site. Residues C101 and C108 each contribute to the Zn(2+) site.

It belongs to the PRA-CH family. As to quaternary structure, homodimer. Requires Mg(2+) as cofactor. Zn(2+) is required as a cofactor.

It is found in the cytoplasm. It carries out the reaction 1-(5-phospho-beta-D-ribosyl)-5'-AMP + H2O = 1-(5-phospho-beta-D-ribosyl)-5-[(5-phospho-beta-D-ribosylamino)methylideneamino]imidazole-4-carboxamide. Its pathway is amino-acid biosynthesis; L-histidine biosynthesis; L-histidine from 5-phospho-alpha-D-ribose 1-diphosphate: step 3/9. Catalyzes the hydrolysis of the adenine ring of phosphoribosyl-AMP. This is Phosphoribosyl-AMP cyclohydrolase from Chloroherpeton thalassium (strain ATCC 35110 / GB-78).